The primary structure comprises 333 residues: Sphingomyelinase C (333 aa).

Residues 1-27 form the signal peptide; it reads MKGKLLKGVLSLGVGLGALYSGTSAQA. C150 and C186 are oxidised to a cystine.

Belongs to the neutral sphingomyelinase family. Requires Mg(2+) as cofactor.

It localises to the secreted. The enzyme catalyses a sphingomyelin + H2O = phosphocholine + an N-acylsphing-4-enine + H(+). With respect to regulation, activated by cobalt and manganese ions. In terms of biological role, required, with sphingomyelinase, to effect target cell lysis (hemolysis). This Bacillus cereus protein is Sphingomyelinase C (sph).